A 320-amino-acid polypeptide reads, in one-letter code: uncharacterized protein (320 aa).

To S.pombe SpAC23H3.12c.

This is an uncharacterized protein from Saccharomyces cerevisiae (strain ATCC 204508 / S288c) (Baker's yeast).